The following is an 89-amino-acid chain: Putative defensin-like protein 230 (89 aa).

The signal sequence occupies residues M1–A26. 4 disulfide bridges follow: C30–C84, C40–C65, C48–C78, and C63–C80.

The protein belongs to the DEFL family.

The protein localises to the secreted. This Arabidopsis thaliana (Mouse-ear cress) protein is Putative defensin-like protein 230 (SCRL24).